Reading from the N-terminus, the 475-residue chain is Glycogen synthase (475 aa).

Lys15 is an ADP-alpha-D-glucose binding site.

This sequence belongs to the glycosyltransferase 1 family. Bacterial/plant glycogen synthase subfamily.

It carries out the reaction [(1-&gt;4)-alpha-D-glucosyl](n) + ADP-alpha-D-glucose = [(1-&gt;4)-alpha-D-glucosyl](n+1) + ADP + H(+). It participates in glycan biosynthesis; glycogen biosynthesis. Functionally, synthesizes alpha-1,4-glucan chains using ADP-glucose. This chain is Glycogen synthase, found in Clostridium kluyveri (strain ATCC 8527 / DSM 555 / NBRC 12016 / NCIMB 10680 / K1).